We begin with the raw amino-acid sequence, 174 residues long: Crossover junction endodeoxyribonuclease RuvC (174 aa).

Residues D8, E67, and D139 contribute to the active site. 3 residues coordinate Mg(2+): D8, E67, and D139.

The protein belongs to the RuvC family. Homodimer which binds Holliday junction (HJ) DNA. The HJ becomes 2-fold symmetrical on binding to RuvC with unstacked arms; it has a different conformation from HJ DNA in complex with RuvA. In the full resolvosome a probable DNA-RuvA(4)-RuvB(12)-RuvC(2) complex forms which resolves the HJ. Mg(2+) is required as a cofactor.

Its subcellular location is the cytoplasm. The catalysed reaction is Endonucleolytic cleavage at a junction such as a reciprocal single-stranded crossover between two homologous DNA duplexes (Holliday junction).. Functionally, the RuvA-RuvB-RuvC complex processes Holliday junction (HJ) DNA during genetic recombination and DNA repair. Endonuclease that resolves HJ intermediates. Cleaves cruciform DNA by making single-stranded nicks across the HJ at symmetrical positions within the homologous arms, yielding a 5'-phosphate and a 3'-hydroxyl group; requires a central core of homology in the junction. The consensus cleavage sequence is 5'-(A/T)TT(C/G)-3'. Cleavage occurs on the 3'-side of the TT dinucleotide at the point of strand exchange. HJ branch migration catalyzed by RuvA-RuvB allows RuvC to scan DNA until it finds its consensus sequence, where it cleaves and resolves the cruciform DNA. In Pseudoalteromonas translucida (strain TAC 125), this protein is Crossover junction endodeoxyribonuclease RuvC.